A 152-amino-acid polypeptide reads, in one-letter code: MTKERTFIAIKPDGVQRGYVSEIIGRFEKKGFKLVGLKQLIPSKELAQNHYGVHRERPFFGDLVDFISSGPVVAMVWEGEGVILSARKLIGSTKPLEAEPGTIRGDLAIDIGRNIIHGSDGEDTAKFEIDLWFNEEELCEWETSDLKWRSEN.

6 residues coordinate ATP: K11, F59, R87, T93, R104, and N114. The Pros-phosphohistidine intermediate role is filled by H117.

It belongs to the NDK family. As to quaternary structure, homotetramer. Mg(2+) serves as cofactor.

It localises to the cytoplasm. The enzyme catalyses a 2'-deoxyribonucleoside 5'-diphosphate + ATP = a 2'-deoxyribonucleoside 5'-triphosphate + ADP. It carries out the reaction a ribonucleoside 5'-diphosphate + ATP = a ribonucleoside 5'-triphosphate + ADP. Its function is as follows. Major role in the synthesis of nucleoside triphosphates other than ATP. The ATP gamma phosphate is transferred to the NDP beta phosphate via a ping-pong mechanism, using a phosphorylated active-site intermediate. The sequence is that of Nucleoside diphosphate kinase from Prochlorococcus marinus (strain MIT 9301).